A 682-amino-acid chain; its full sequence is Potassium-transporting ATPase ATP-binding subunit (682 aa).

Helical transmembrane passes span 34–54 (PVMF…LAMV), 58–78 (IAGS…TVLF), 219–239 (IALT…TATL), and 254–274 (VLVA…LSAI). The active-site 4-aspartylphosphate intermediate is the Asp-307. Residues Asp-344, Glu-348, 377-384 (FTAQSRMS), and Lys-395 contribute to the ATP site. Asp-518 and Asp-522 together coordinate Mg(2+). 3 helical membrane passes run 588 to 608 (FAII…LNVM), 616 to 636 (AILS…PLAL), and 662 to 682 (LLVP…LGLA).

It belongs to the cation transport ATPase (P-type) (TC 3.A.3) family. Type IA subfamily. As to quaternary structure, the system is composed of three essential subunits: KdpA, KdpB and KdpC.

The protein localises to the cell inner membrane. The enzyme catalyses K(+)(out) + ATP + H2O = K(+)(in) + ADP + phosphate + H(+). In terms of biological role, part of the high-affinity ATP-driven potassium transport (or Kdp) system, which catalyzes the hydrolysis of ATP coupled with the electrogenic transport of potassium into the cytoplasm. This subunit is responsible for energy coupling to the transport system and for the release of the potassium ions to the cytoplasm. The protein is Potassium-transporting ATPase ATP-binding subunit of Salmonella dublin (strain CT_02021853).